The following is a 418-amino-acid chain: Putative methylthiotransferase HP_0285 (418 aa).

The MTTase N-terminal domain maps to 2-110; the sequence is KKVYFKTFGC…INALLQEKKR (109 aa). Residues C11, C45, C74, C144, C148, and C151 each contribute to the [4Fe-4S] cluster site. Residues 130 to 355 enclose the Radical SAM core domain; the sequence is FVGKTRAFIK…KDLIFHKNKA (226 aa).

The protein belongs to the methylthiotransferase family. [4Fe-4S] cluster is required as a cofactor.

This chain is Putative methylthiotransferase HP_0285, found in Helicobacter pylori (strain ATCC 700392 / 26695) (Campylobacter pylori).